The chain runs to 553 residues: Arginine--tRNA ligase (553 aa).

The short motif at 130–140 (ANPTGDLHIGH) is the 'HIGH' region element.

This sequence belongs to the class-I aminoacyl-tRNA synthetase family. In terms of assembly, monomer.

The protein localises to the cytoplasm. The catalysed reaction is tRNA(Arg) + L-arginine + ATP = L-arginyl-tRNA(Arg) + AMP + diphosphate. The chain is Arginine--tRNA ligase from Staphylococcus aureus (strain MRSA252).